The following is a 124-amino-acid chain: Ubiquinol-cytochrome-c reductase complex assembly factor 2 (124 aa).

The N-terminal 13 residues, 1–13 (MASLRYRRFLKLC), are a transit peptide targeting the mitochondrion.

It localises to the mitochondrion matrix. The protein resides in the mitochondrion nucleoid. It is found in the mitochondrion. Functionally, required for the assembly of the ubiquinol-cytochrome c reductase complex (mitochondrial respiratory chain complex III or cytochrome b-c1 complex). May play a role in the modulation of respiratory chain activities such as oxygen consumption and ATP production. May be involved in cytochrome b translation and/or stability. This chain is Ubiquinol-cytochrome-c reductase complex assembly factor 2 (uqcc2), found in Xenopus tropicalis (Western clawed frog).